The chain runs to 237 residues: Orotidine 5'-phosphate decarboxylase (237 aa).

Residues D11, K34, 61–70 (DLKLHDIPNT), T124, R186, Q195, G215, and R216 each bind substrate. K63 (proton donor) is an active-site residue.

The protein belongs to the OMP decarboxylase family. Type 1 subfamily. As to quaternary structure, homodimer.

It carries out the reaction orotidine 5'-phosphate + H(+) = UMP + CO2. Its pathway is pyrimidine metabolism; UMP biosynthesis via de novo pathway; UMP from orotate: step 2/2. Functionally, catalyzes the decarboxylation of orotidine 5'-monophosphate (OMP) to uridine 5'-monophosphate (UMP). The chain is Orotidine 5'-phosphate decarboxylase from Lactococcus lactis subsp. cremoris (strain SK11).